The sequence spans 180 residues: Cytochrome b6-f complex iron-sulfur subunit (180 aa).

A helical membrane pass occupies residues 21–43; the sequence is LLTFGTITGTALGALYPVVKYFI. In terms of domain architecture, Rieske spans 66–162; the sequence is VSEYLAKHLP…ATVTEDDKLV (97 aa). 4 residues coordinate [2Fe-2S] cluster: Cys108, His110, Cys126, and His129. Residues Cys113 and Cys128 are joined by a disulfide bond.

It belongs to the Rieske iron-sulfur protein family. In terms of assembly, the 4 large subunits of the cytochrome b6-f complex are cytochrome b6, subunit IV (17 kDa polypeptide, PetD), cytochrome f and the Rieske protein, while the 4 small subunits are PetG, PetL, PetM and PetN. The complex functions as a dimer. [2Fe-2S] cluster is required as a cofactor.

The protein localises to the cellular thylakoid membrane. The catalysed reaction is 2 oxidized [plastocyanin] + a plastoquinol + 2 H(+)(in) = 2 reduced [plastocyanin] + a plastoquinone + 4 H(+)(out). Its function is as follows. Component of the cytochrome b6-f complex, which mediates electron transfer between photosystem II (PSII) and photosystem I (PSI), cyclic electron flow around PSI, and state transitions. This is Cytochrome b6-f complex iron-sulfur subunit from Thermosynechococcus vestitus (strain NIES-2133 / IAM M-273 / BP-1).